Here is a 96-residue protein sequence, read N- to C-terminus: MKEVLMRIYSSKEENLEDYINKLFEGGIRGAVVLQGIAGFGKGREFHSEEIEVLSYELPVVIEVVEDREKLLNFLKENRETFKNCYITFERVKVWE.

This sequence belongs to the UPF0166 family.

The sequence is that of UPF0166 protein aq_448 from Aquifex aeolicus (strain VF5).